The sequence spans 120 residues: Large ribosomal subunit protein bL12 (120 aa).

It belongs to the bacterial ribosomal protein bL12 family. Homodimer. Part of the ribosomal stalk of the 50S ribosomal subunit. Forms a multimeric L10(L12)X complex, where L10 forms an elongated spine to which 2 to 4 L12 dimers bind in a sequential fashion. Binds GTP-bound translation factors.

Forms part of the ribosomal stalk which helps the ribosome interact with GTP-bound translation factors. Is thus essential for accurate translation. The protein is Large ribosomal subunit protein bL12 of Clostridium botulinum (strain Alaska E43 / Type E3).